Here is a 360-residue protein sequence, read N- to C-terminus: UDP-N-acetylglucosamine--N-acetylmuramyl-(pentapeptide) pyrophosphoryl-undecaprenol N-acetylglucosamine transferase (360 aa).

UDP-N-acetyl-alpha-D-glucosamine-binding positions include 17–19 (TAG), N130, R166, S200, I247, and Q291.

This sequence belongs to the glycosyltransferase 28 family. MurG subfamily.

The protein localises to the cell membrane. It carries out the reaction di-trans,octa-cis-undecaprenyl diphospho-N-acetyl-alpha-D-muramoyl-L-alanyl-D-glutamyl-meso-2,6-diaminopimeloyl-D-alanyl-D-alanine + UDP-N-acetyl-alpha-D-glucosamine = di-trans,octa-cis-undecaprenyl diphospho-[N-acetyl-alpha-D-glucosaminyl-(1-&gt;4)]-N-acetyl-alpha-D-muramoyl-L-alanyl-D-glutamyl-meso-2,6-diaminopimeloyl-D-alanyl-D-alanine + UDP + H(+). It participates in cell wall biogenesis; peptidoglycan biosynthesis. In terms of biological role, cell wall formation. Catalyzes the transfer of a GlcNAc subunit on undecaprenyl-pyrophosphoryl-MurNAc-pentapeptide (lipid intermediate I) to form undecaprenyl-pyrophosphoryl-MurNAc-(pentapeptide)GlcNAc (lipid intermediate II). This chain is UDP-N-acetylglucosamine--N-acetylmuramyl-(pentapeptide) pyrophosphoryl-undecaprenol N-acetylglucosamine transferase, found in Corynebacterium efficiens (strain DSM 44549 / YS-314 / AJ 12310 / JCM 11189 / NBRC 100395).